The sequence spans 348 residues: Abnormal cell lineage protein 44 (348 aa).

Residues methionine 1–alanine 25 form the signal peptide. Intrachain disulfides connect cysteine 91-cysteine 102, cysteine 141-cysteine 149, cysteine 151-cysteine 165, cysteine 213-cysteine 227, cysteine 215-cysteine 222, cysteine 272-cysteine 299, cysteine 282-cysteine 294, cysteine 298-cysteine 338, cysteine 314-cysteine 329, cysteine 316-cysteine 326, and cysteine 321-cysteine 322. Serine 219 carries the O-palmitoleoyl serine; by mom-1 lipid modification. N-linked (GlcNAc...) asparagine glycosylation is present at asparagine 286.

Belongs to the Wnt family. In terms of processing, palmitoleoylation is required for efficient binding to frizzled receptors. Depalmitoleoylation leads to Wnt signaling pathway inhibition. Expressed in the tail hypodermis.

It localises to the secreted. The protein resides in the extracellular space. Its subcellular location is the extracellular matrix. In terms of biological role, ligand for members of the frizzled family of seven transmembrane receptors. Affects male tail development, vulval precursor cell specification and egg laying. Involved in morphogenesis by influencing polarity of asymmetric cell divisions of the B, U, and F cells in the male, and the T cell in males and hermaphrodites. Controls spindle orientation in B-gamma cell division during male copulatory spicule development. Involved in specification of the P7.p lineage during vulval development. Has a role in providing polarity and default lin-17 localization in axon development and positioning of neuromuscular synapses in DA9 regions by negatively regulating synaptogenesis. Plays a role in motorneuron development by promoting the extension of the anterior neurite of ventral D-type GABAergic motorneurons along the anterior-posterior axis of the ventral nerve cord. Positively regulates cilium position and dendrite morphogenesis in postembryonic PQR gas-sensing neurons. This is likely through regulating the localization of grdn-1 to the distal dendrites of PQR sensory neurons. This Caenorhabditis elegans protein is Abnormal cell lineage protein 44.